A 131-amino-acid polypeptide reads, in one-letter code: Profilin (131 aa).

This sequence belongs to the profilin family. In terms of assembly, occurs in many kinds of cells as a complex with monomeric actin in a 1:1 ratio.

The protein localises to the cytoplasm. It is found in the cytoskeleton. Binds to actin and affects the structure of the cytoskeleton. At high concentrations, profilin prevents the polymerization of actin, whereas it enhances it at low concentrations. By binding to PIP2, it inhibits the formation of IP3 and DG. The chain is Profilin from Pyrus communis (Pear).